Here is a 97-residue protein sequence, read N- to C-terminus: Small ribosomal subunit protein bS20 (97 aa).

This sequence belongs to the bacterial ribosomal protein bS20 family.

Its function is as follows. Binds directly to 16S ribosomal RNA. The chain is Small ribosomal subunit protein bS20 from Methylibium petroleiphilum (strain ATCC BAA-1232 / LMG 22953 / PM1).